The chain runs to 187 residues: Protein TIFY 11b (187 aa).

The region spanning 68 to 103 is the Tify domain; sequence ATAPAAPLTIFYGGRMVVFEDFPADKAAEVMRMASS. The Jas signature appears at 121–145; the sequence is PIMRKASLQRFFAKRKDRLAATTPY. The Nuclear localization signal signature appears at 123–130; sequence MRKASLQR. Residues 139–168 are disordered; that stretch reads LAATTPYARPSPAETKASEPEEKKTPTSWL. Positions 154-163 are enriched in basic and acidic residues; that stretch reads KASEPEEKKT.

The protein belongs to the TIFY/JAZ family. In terms of assembly, interacts with COI1B in a coronatine-dependent manner. Coronatine is an analog of jasmonoyl isoleucine (JA-Ile). In terms of processing, ubiquitinated. Targeted for degradation by the SCF(COI1) E3 ubiquitin ligase-proteasome pathway during jasmonate signaling.

It is found in the nucleus. Repressor of jasmonate responses. In Oryza sativa subsp. japonica (Rice), this protein is Protein TIFY 11b.